The primary structure comprises 235 residues: Histidine/lysine/arginine/ornithine transport system permease protein HisM (235 aa).

At 1–26 the chain is on the periplasmic side; it reads MIEIIQEYWKSLLWTDGYRFTGVAIT. The region spanning 23-221 is the ABC transmembrane type-1 domain; it reads VAITLWLLIS…LISYVLISLF (199 aa). Residues 27–47 traverse the membrane as a helical segment; sequence LWLLISSVVMGGLLAVILAVG. Topologically, residues 48–58 are cytoplasmic; it reads RVSSNKFIRFP. The chain crosses the membrane as a helical span at residues 59-79; that stretch reads IWLFTYIFRGTPLYVQLLVFY. Residues 80–104 are Periplasmic-facing; the sequence is SGMYTLEIVKGTDLLNAFFRSGLNC. A helical transmembrane segment spans residues 105-125; it reads TVLALTLNTCAYTTEIFAGAI. Topologically, residues 126 to 157 are cytoplasmic; that stretch reads RSVPHGEIEAARAYGFSSFKMYRCIILPSALR. Residues 158–178 form a helical membrane-spanning segment; it reads IALPAYSNEVILMLHSTALAF. Residues 179–199 are Periplasmic-facing; sequence TATVPDLLKIARDINSATYQP. A helical transmembrane segment spans residues 200 to 220; the sequence is FTAFGIAAVLYLLISYVLISL. The Cytoplasmic portion of the chain corresponds to 221-235; it reads FRRAERRWLQHVSSK.

Belongs to the binding-protein-dependent transport system permease family. HisMQ subfamily. In terms of assembly, the HisPMQJ complex is composed of two ATP-binding proteins (HisP), two transmembrane proteins (HisM and HisQ) and a solute-binding protein (HisJ). The HisPMQ-ArgT complex is composed of two ATP-binding proteins (HisP), two transmembrane proteins (HisM and HisQ) and a solute-binding protein (ArgT).

The protein resides in the cell inner membrane. Functionally, part of the ABC transporter complex HisPMQJ involved in histidine transport. Is also part of the ABC transporter complex HisPMQ-ArgT involved in lysine/arginine/ornithine transport. Probably responsible for the translocation of the substrate across the membrane. In Salmonella typhi, this protein is Histidine/lysine/arginine/ornithine transport system permease protein HisM (hisM).